The following is a 336-amino-acid chain: Tetraacyldisaccharide 4'-kinase (336 aa).

Residue 60–67 (TAGGNGKT) participates in ATP binding.

This sequence belongs to the LpxK family.

The catalysed reaction is a lipid A disaccharide + ATP = a lipid IVA + ADP + H(+). The protein operates within glycolipid biosynthesis; lipid IV(A) biosynthesis; lipid IV(A) from (3R)-3-hydroxytetradecanoyl-[acyl-carrier-protein] and UDP-N-acetyl-alpha-D-glucosamine: step 6/6. Transfers the gamma-phosphate of ATP to the 4'-position of a tetraacyldisaccharide 1-phosphate intermediate (termed DS-1-P) to form tetraacyldisaccharide 1,4'-bis-phosphate (lipid IVA). The protein is Tetraacyldisaccharide 4'-kinase of Vibrio cholerae serotype O1 (strain ATCC 39315 / El Tor Inaba N16961).